A 698-amino-acid polypeptide reads, in one-letter code: SHC SH2 domain-binding protein 1 homolog B (698 aa).

PbH1 repeat units follow at residues 480–502 (CAEL…EIYP), 503–524 (GSKC…LIKD), and 532–554 (IPKI…VLVK).

Its subcellular location is the midbody. It localises to the cytoplasm. The protein resides in the cytoskeleton. It is found in the spindle. Functionally, may play a role in signaling pathways governing cellular proliferation. This is SHC SH2 domain-binding protein 1 homolog B (shcbp1-b) from Xenopus laevis (African clawed frog).